The chain runs to 244 residues: Extracellular superoxide dismutase [Cu-Zn] (244 aa).

The first 18 residues, 1–18 (MLALVCSCLLLAALPADT), serve as a signal peptide directing secretion. Cystine bridges form between Cys-67–Cys-212 and Cys-129–Cys-211. The N-linked (GlcNAc...) asparagine glycan is linked to Asn-111. 3 residues coordinate Cu cation: His-118, His-120, and His-135. His-135, His-143, His-146, and Asp-149 together coordinate Zn(2+). His-185 provides a ligand contact to Cu cation. Residues 221 to 244 (PWARQAQEHAERKKRRRESECKAA) form a disordered region. Residues 226–244 (AQEHAERKKRRRESECKAA) are compositionally biased toward basic and acidic residues.

It belongs to the Cu-Zn superoxide dismutase family. Homotetramer. Directly interacts with ATP7A; this interaction is copper-dependent and is required for SOD3 activity. It depends on Cu cation as a cofactor. Requires Zn(2+) as cofactor.

It is found in the secreted. The protein resides in the extracellular space. The protein localises to the golgi apparatus. It localises to the trans-Golgi network. The enzyme catalyses 2 superoxide + 2 H(+) = H2O2 + O2. Protect the extracellular space from toxic effect of reactive oxygen intermediates by converting superoxide radicals into hydrogen peroxide and oxygen. This Oryctolagus cuniculus (Rabbit) protein is Extracellular superoxide dismutase [Cu-Zn] (SOD3).